The sequence spans 459 residues: ATP-dependent protease ATPase subunit HslU (459 aa).

Residues Val-18, 60–65 (GVGKTE), Asp-272, Glu-337, and Arg-409 contribute to the ATP site.

Belongs to the ClpX chaperone family. HslU subfamily. In terms of assembly, a double ring-shaped homohexamer of HslV is capped on each side by a ring-shaped HslU homohexamer. The assembly of the HslU/HslV complex is dependent on binding of ATP.

The protein localises to the cytoplasm. In terms of biological role, ATPase subunit of a proteasome-like degradation complex; this subunit has chaperone activity. The binding of ATP and its subsequent hydrolysis by HslU are essential for unfolding of protein substrates subsequently hydrolyzed by HslV. HslU recognizes the N-terminal part of its protein substrates and unfolds these before they are guided to HslV for hydrolysis. The sequence is that of ATP-dependent protease ATPase subunit HslU from Thermoanaerobacter sp. (strain X514).